Consider the following 466-residue polypeptide: Glutamate--tRNA ligase 2 (466 aa).

The short motif at 11 to 21 (PSPTGFLHIGG) is the 'HIGH' region element. Positions 239 to 243 (KLSKR) match the 'KMSKS' region motif. K242 contributes to the ATP binding site.

Belongs to the class-I aminoacyl-tRNA synthetase family. Glutamate--tRNA ligase type 1 subfamily. As to quaternary structure, monomer.

It is found in the cytoplasm. It carries out the reaction tRNA(Glu) + L-glutamate + ATP = L-glutamyl-tRNA(Glu) + AMP + diphosphate. In terms of biological role, catalyzes the attachment of glutamate to tRNA(Glu) in a two-step reaction: glutamate is first activated by ATP to form Glu-AMP and then transferred to the acceptor end of tRNA(Glu). The protein is Glutamate--tRNA ligase 2 of Roseobacter denitrificans (strain ATCC 33942 / OCh 114) (Erythrobacter sp. (strain OCh 114)).